We begin with the raw amino-acid sequence, 212 residues long: Ribosomal RNA small subunit methyltransferase G (212 aa).

S-adenosyl-L-methionine-binding positions include Gly-73, Phe-78, 124 to 125 (IE), and Arg-137.

This sequence belongs to the methyltransferase superfamily. RNA methyltransferase RsmG family.

The protein resides in the cytoplasm. In terms of biological role, specifically methylates the N7 position of a guanine in 16S rRNA. This chain is Ribosomal RNA small subunit methyltransferase G, found in Karelsulcia muelleri (strain GWSS) (Sulcia muelleri).